The primary structure comprises 389 residues: Lipopolysaccharide assembly protein B (389 aa).

A helical transmembrane segment spans residues 1–20 (MLELLFLLLPVAAAYGWYMG). Topologically, residues 21 to 389 (RRSAQQNKQD…IKPIRGLDGL (369 aa)) are cytoplasmic. TPR repeat units lie at residues 35–68 (LSRDYVAGVNFLLSNQQDKAVDLFLDMLKEDTGT), 69–102 (VEAHLTLGNLFRSRGEVDRAIRIHQTLMESASLT), 107–140 (LLAIQQLGRDYMAAGLYDRAEDMFNQLTDETDFR), 142–174 (GALQQLLQIYQATSEWQKAIDVAERLVKLGKDK), 180–213 (AHFYCELALQHMASDDLDRAMTLLKKGAAADKNS), 214–247 (ARVSIMMGRVFMAKGEYAKAVESLQRVISQDREL), and 249–282 (SETLEMLQTCYQQLGKTAEWAEFLQRAVEENTGA). Fe cation contacts are provided by C357, C360, C371, and C374.

The protein belongs to the LapB family.

It is found in the cell inner membrane. Modulates cellular lipopolysaccharide (LPS) levels by regulating LpxC, which is involved in lipid A biosynthesis. May act by modulating the proteolytic activity of FtsH towards LpxC. May also coordinate assembly of proteins involved in LPS synthesis at the plasma membrane. This is Lipopolysaccharide assembly protein B from Escherichia coli O157:H7.